The sequence spans 33 residues: uncharacterized protein (33 aa).

Residues Leu11–Phe31 traverse the membrane as a helical segment.

It localises to the membrane. This is an uncharacterized protein from Saccharomyces cerevisiae (strain ATCC 204508 / S288c) (Baker's yeast).